Here is a 1441-residue protein sequence, read N- to C-terminus: Histone-lysine N-methyltransferase SETD5 (1441 aa).

Residues 1–28 (MSIAIPLGVTTPDTSYSDMAAGSDPESV) are disordered. Leucine 70 carries the phosphothreonine modification. A phosphoserine mark is found at serine 72 and valine 74. Positions 156–202 (TPTSITLTVRRTKPKKRKKSPEKGRAAPKTKKIKNSPSEAQNLDENT) are disordered. The segment covering 165-189 (RRTKPKKRKKSPEKGRAAPKTKKIK) has biased composition (basic residues). Positions 190–202 (NSPSEAQNLDENT) are enriched in polar residues. In terms of domain architecture, SET spans 269-390 (MQLQLGRVTR…KDAEVTIAFD (122 aa)). 2 disordered regions span residues 417-683 (NPNA…TVIS) and 793-816 (MTQTSSVPQETRTQHLYQSNETSN). 2 stretches are compositionally biased toward acidic residues: residues 450–461 (LEQQNEVPEENP) and 479–501 (EEVDNPEEKPEEEEKEEATDDQE). Composition is skewed to low complexity over residues 539–552 (SSSDIEITTSSSEI) and 561–572 (AAPESEVSSPVS). Residues 575-588 (AIPSTPQSTGVNTR) show a composition bias toward polar residues. Over residues 611-621 (SRPRPKSRISR) the composition is skewed to basic residues. Over residues 635–650 (QAIAQQAELSQAALEE) the composition is skewed to low complexity. Residues 652–683 (GSNNSVTPPEAGNTDSSGENRQLTGSDPTVIS) are compositionally biased toward polar residues. A phosphoserine mark is found at serine 829 and serine 852. Disordered stretches follow at residues 849 to 883 (QPLSPVTPPPPSSGSKSPQLTTPGQTHPGEEECRN), 1036 to 1228 (DLSR…SKGA), and 1243 to 1441 (CDSP…TGLS). Threonine 855 bears the Phosphothreonine mark. Basic residues predominate over residues 1062 to 1076 (QRKKVSLLEYRKRKQ). Over residues 1087-1107 (DSSQSKSKSSGAGQGSSNSVS) the composition is skewed to low complexity. The segment covering 1144-1163 (PSDSRGTSSSHCRPQENISS) has biased composition (polar residues). A Phosphoserine modification is found at serine 1197. Low complexity predominate over residues 1250–1259 (SQSLLQQSSS). The segment covering 1265–1275 (PTQSPGYSYRT) has biased composition (polar residues). A compositionally biased stretch (low complexity) spans 1284–1300 (PSHGSSESSLSSTSYPS). Residues 1319–1333 (YYSSQPHSGNSTGSN) show a composition bias toward polar residues. The span at 1335 to 1372 (PRRSCSSSAASPTPQGPSDSPTSDSVSQSSTGTLSSTS) shows a compositional bias: low complexity. Polar residues-rich tracts occupy residues 1373 to 1382 (FPQNSRSSLP), 1389 to 1412 (SLPNAGQSAAYQASRVSAVSNSQH), and 1429 to 1441 (LQGSGVKTQTGLS).

As to quaternary structure, interacts with components of the PAF1 complex (PAF1C) such as LEO1, CTR9 and CDC73. Interacts with NCOR1. Interacts with HDAC3. Ubiquitously expressed.

The protein resides in the nucleus. The protein localises to the chromosome. The enzyme catalyses L-lysyl(9)-[histone H3] + S-adenosyl-L-methionine = N(6)-methyl-L-lysyl(9)-[histone H3] + S-adenosyl-L-homocysteine + H(+). It catalyses the reaction L-lysyl(36)-[histone H3] + 3 S-adenosyl-L-methionine = N(6),N(6),N(6)-trimethyl-L-lysyl(36)-[histone H3] + 3 S-adenosyl-L-homocysteine + 3 H(+). Chromatin regulator required for brain development: acts as a regulator of RNA elongation rate, thereby regulating neural stem cell (NSC) proliferation and synaptic transmission. May act by mediating trimethylation of 'Lys-36' of histone H3 (H3K36me3), which is essential to allow on-time RNA elongation dynamics. Also monomethylates 'Lys-9' of histone H3 (H3K9me1) in vitro. The relevance of histone methyltransferase activity is however subject to discussion. The chain is Histone-lysine N-methyltransferase SETD5 from Mus musculus (Mouse).